A 533-amino-acid chain; its full sequence is Putative amidase C550.07 (533 aa).

Residues Lys132 and Ser207 each act as charge relay system in the active site. Ser231 serves as the catalytic Acyl-ester intermediate.

It belongs to the amidase family.

Its subcellular location is the cytoplasm. It is found in the nucleus. The catalysed reaction is a monocarboxylic acid amide + H2O = a monocarboxylate + NH4(+). This Schizosaccharomyces pombe (strain 972 / ATCC 24843) (Fission yeast) protein is Putative amidase C550.07.